Here is a 329-residue protein sequence, read N- to C-terminus: Biotin--protein ligase 2 (329 aa).

A BPL/LPL catalytic domain is found at Ile67–Met251. Biotin contacts are provided by residues Ser84 to Thr85, Gln107, Arg111 to Arg113, and Lys182.

Belongs to the biotin--protein ligase family. In terms of tissue distribution, highly expressed in seeds. Expressed in roots, leaves, stems, flowers and siliques.

It is found in the cytoplasm. Its function is as follows. Seems to have no or limited implication in biotin-dependent carboxylase biotinylation in planta. The protein is Biotin--protein ligase 2 (HCS2) of Arabidopsis thaliana (Mouse-ear cress).